The chain runs to 411 residues: POU domain, class 4, transcription factor 2 (411 aa).

Positions Leu-29–Pro-95 are disordered. Positions Ser-31–Asn-52 are enriched in low complexity. Composition is skewed to gly residues over residues Ala-53 to Arg-68 and Gly-76 to Ser-86. Residues Cys-93–His-239 form a required for transcriptional activation region. Residues Arg-112–Ile-121 carry the POU-IV box motif. The segment covering Ser-154–Ala-168 has biased composition (low complexity). Positions Ser-154–Leu-190 are disordered. The span at Thr-172–Pro-186 shows a compositional bias: basic residues. The short motif at His-173–His-187 is the Nuclear speckle targeting signal element. Positions Ala-240–Ile-411 are required for DNA-binding and transcriptional repression. Residues Asp-252–Glu-329 form the POU-specific domain. The homeobox DNA-binding region spans Lys-347–Lys-406.

This sequence belongs to the POU transcription factor family. Class-4 subfamily. In terms of assembly, isoform 2: Interacts with POU4F1 isoform 1; this interaction inhibits both POU4F1 DNA-binding and transcriptional activities. Isoform 2: Interacts (C-terminus) with ESR1 (via DNA-binding domain); this interaction increases the estrogen receptor ESR1 transcriptional activity in a DNA- and ligand 17-beta-estradiol-independent manner. Isoform 2: Interacts (via C-terminus) with TP53 (via N-terminus). Interacts with DLX1 (via homeobox DNA-binding domain); this interaction suppresses DLX1-mediated transcriptional activity in postnatal retina enhancing retinal ganglion cell (RGC) differentiation. Interacts with DLX2 (via homeobox DNA-binding domain); this interaction enhances RGC differentiation. Isoform 1: Interacts (via C-terminus) with ISL1 (via C-terminus). Isoform 1: Interacts with ISL2. Isoform 1: Interacts with LHX2. As to expression, expressed in retinal ganglion cells (RGCs). Expressed in mature osteoclasts. Expressed in cells of layers of the superior colliculus and the adjacent periaqueductal gray (at protein level). Expressed in the brain, peripheral sensory nervous system and retina. Expressed in the optical, intermediate, and deep gray areas of the superior colliculus, the dorsal column of the mesencephalic and pontine central gray, and the lateral interpeduncular nucleus of the brain. Expressed predominantly in postmitotic, terminally differentiated neurons. Expressed in ganglion cell layer (GCL) of the retina.

It is found in the nucleus. The protein resides in the nucleus speckle. It localises to the cytoplasm. In terms of biological role, tissue-specific DNA-binding transcription factor involved in the development and differentiation of target cells. Functions either as activator or repressor by modulating the rate of target gene transcription through RNA polymerase II enzyme in a promoter-dependent manner. Binds to the consensus octamer motif 5'-AT[A/T]A[T/A]T[A/T]A-3' of promoter of target genes. Plays a fundamental role in the gene regulatory network essential for retinal ganglion cell (RGC) differentiation. Binds to an octamer site to form a ternary complex with ISL1; cooperates positively with ISL1 and ISL2 to potentiate transcriptional activation of RGC target genes being involved in RGC fate commitment in the developing retina and RGC axon formation and pathfinding. Inhibits DLX1 and DLX2 transcriptional activities preventing DLX1- and DLX2-mediated ability to promote amacrine cell fate specification. In cooperation with TP53 potentiates transcriptional activation of BAX promoter activity increasing neuronal cell apoptosis. Negatively regulates BAX promoter activity in the absence of TP53. Acts as a transcriptional coactivator via its interaction with the transcription factor ESR1 by enhancing its effect on estrogen response element (ERE)-containing promoter. Antagonizes the transcriptional stimulatory activity of POU4F1 by preventing its binding to an octamer motif. Involved in TNFSF11-mediated terminal osteoclast differentiation. In Mus musculus (Mouse), this protein is POU domain, class 4, transcription factor 2.